Here is a 126-residue protein sequence, read N- to C-terminus: Small ribosomal subunit protein bS6 (126 aa).

The disordered stretch occupies residues 101–126 (VMMKAKEERTAKREDAAPRAEEAAAE). The span at 104–126 (KAKEERTAKREDAAPRAEEAAAE) shows a compositional bias: basic and acidic residues.

This sequence belongs to the bacterial ribosomal protein bS6 family.

Binds together with bS18 to 16S ribosomal RNA. The chain is Small ribosomal subunit protein bS6 from Aliivibrio salmonicida (strain LFI1238) (Vibrio salmonicida (strain LFI1238)).